The primary structure comprises 217 residues: Ribonuclease HII (217 aa).

In terms of domain architecture, RNase H type-2 spans 27–216 (SQVAGVDEAG…VKESIQEGVC (190 aa)). Positions 33, 34, and 126 each coordinate a divalent metal cation.

It belongs to the RNase HII family. Requires Mn(2+) as cofactor. The cofactor is Mg(2+).

The protein resides in the cytoplasm. It carries out the reaction Endonucleolytic cleavage to 5'-phosphomonoester.. Its function is as follows. Endonuclease that specifically degrades the RNA of RNA-DNA hybrids. This chain is Ribonuclease HII (rnhB), found in Chlamydia trachomatis serovar D (strain ATCC VR-885 / DSM 19411 / UW-3/Cx).